The primary structure comprises 81 residues: Conotoxin Vc6.7 (81 aa).

Residues 1–19 (MEKLTILLLVAAVLMSIQA) form the signal peptide. Residues 20–44 (VNQEKHQRAKMNLLSKRKPPAERWW) constitute a propeptide that is removed on maturation. 3 cysteine pairs are disulfide-bonded: cysteine 49-cysteine 63, cysteine 56-cysteine 67, and cysteine 62-cysteine 72.

It belongs to the conotoxin O2 superfamily. In terms of tissue distribution, expressed by the venom duct.

The protein resides in the secreted. Its function is as follows. Inhibits voltage-gated ion channels. The chain is Conotoxin Vc6.7 from Conus victoriae (Queen Victoria cone).